Here is a 290-residue protein sequence, read N- to C-terminus: Outer dense fiber protein 4 (290 aa).

Ser-28 is subject to Phosphoserine. A run of 4 helical transmembrane segments spans residues 44–64 (AQVVASEFSLLAFLLLLLMVF), 132–152 (ISFILAVGLGFVLTVWLHLPY), 164–184 (LIGIILSFCEVTLIFLTLLLF), and 201–221 (IGWSYFIGWLVLILYLTCGIL). Positions 262-290 (ADILDPTQDDQKPLSSDNIALPPNPDTTD) are disordered.

The protein resides in the membrane. In terms of biological role, component of the outer dense fibers (ODF) of spermatozoa which could be involved in sperm tail structure, sperm movement and general organization of cellular cytoskeleton. This is Outer dense fiber protein 4 (Odf4) from Rattus norvegicus (Rat).